A 571-amino-acid polypeptide reads, in one-letter code: MQASEKTLNEIKAKLPYVEVKKDKLLSIVYVQKELLINTLKAIKEDFGFKLFLDHSVVDTLEAQNRFEAFYILYNVDTKERIAVKTRTEHSLPSAEKLWFAAKWAERECYDMFGINYEGHEHLVRAFMWDTYNYHPLRKDFPLQGYETVELPSLNETVFGDNLSNTMNYRRTHTYVPTLKDLEYTEKNRIKKKAQVVLNWGPLHPGTHGTMWFLFDLEGERIVQTDVILGQLHRGVEKLAEHEPYQQFLVYTDRMDYISALCSNQAWTVAVERLLGIEDIVPIKAKYIRTMMSELQRINSHLLWLGTYALDLGALTIFLYAFKEREKIMDIIEGITGARLTISYTRIGGVRMDLPEGALEVIESFIKFFPKELKDWEKILSRNRIWVKRNKNVGVLTKEDIYFYGLTGAVARGSGVFYDIRKLEPYDAYGMVEFDVPLGENGDCYDRYLVRIEEMKQSIRIIEQCVQKLKTMSPNEPFMAESQDPKKLRLTLDGIGLKVPVGEIYSSGENPRGELGFYINSKGGLKPYRVKIRPGSFYNLCVYPHLMENRYVADAVTILASLDPVVGEVDR.

The segment at M1 to R171 is NADH dehydrogenase I subunit C. Residues A194 to R571 form an NADH dehydrogenase I subunit D region.

The protein in the N-terminal section; belongs to the complex I 30 kDa subunit family. It in the C-terminal section; belongs to the complex I 49 kDa subunit family. As to quaternary structure, NDH-1 is composed of 13 different subunits. Subunits NuoB, CD, E, F, and G constitute the peripheral sector of the complex.

It localises to the cell inner membrane. The enzyme catalyses a quinone + NADH + 5 H(+)(in) = a quinol + NAD(+) + 4 H(+)(out). NDH-1 shuttles electrons from NADH, via FMN and iron-sulfur (Fe-S) centers, to quinones in the respiratory chain. The immediate electron acceptor for the enzyme in this species is believed to be ubiquinone. Couples the redox reaction to proton translocation (for every two electrons transferred, four hydrogen ions are translocated across the cytoplasmic membrane), and thus conserves the redox energy in a proton gradient. The polypeptide is NADH-quinone oxidoreductase subunit C/D (nuoC) (Hydrogenobaculum sp. (strain Y04AAS1)).